We begin with the raw amino-acid sequence, 533 residues long: L-aspartate oxidase 1 (533 aa).

Residues 10–13 (SGLA), lysine 32, 39–46 (ASDWAQGG), and aspartate 214 each bind FAD. Arginine 281 acts as the Proton donor/acceptor in catalysis. FAD is bound by residues glutamate 366 and 382-383 (SL).

It belongs to the FAD-dependent oxidoreductase 2 family. NadB subfamily. Requires FAD as cofactor.

Its subcellular location is the cytoplasm. It catalyses the reaction L-aspartate + O2 = iminosuccinate + H2O2. It participates in cofactor biosynthesis; NAD(+) biosynthesis; iminoaspartate from L-aspartate (oxidase route): step 1/1. In terms of biological role, catalyzes the oxidation of L-aspartate to iminoaspartate, the first step in the de novo biosynthesis of NAD(+). This is L-aspartate oxidase 1 (nadB1) from Ralstonia nicotianae (strain ATCC BAA-1114 / GMI1000) (Ralstonia solanacearum).